The following is a 248-amino-acid chain: Type III pantothenate kinase (248 aa).

6 to 13 (DCGNSLIK) lines the ATP pocket. Substrate is bound by residues Y92 and 99 to 102 (GLDR). D101 (proton acceptor) is an active-site residue. K(+) is bound at residue D121. T124 serves as a coordination point for ATP. T180 contacts substrate.

It belongs to the type III pantothenate kinase family. In terms of assembly, homodimer. Requires NH4(+) as cofactor. The cofactor is K(+).

It is found in the cytoplasm. It catalyses the reaction (R)-pantothenate + ATP = (R)-4'-phosphopantothenate + ADP + H(+). Its pathway is cofactor biosynthesis; coenzyme A biosynthesis; CoA from (R)-pantothenate: step 1/5. Catalyzes the phosphorylation of pantothenate (Pan), the first step in CoA biosynthesis. The polypeptide is Type III pantothenate kinase (Pseudomonas aeruginosa (strain LESB58)).